The primary structure comprises 287 residues: MYMDLTLGGALLQVEEATEEEEEEEEEEQALGQEPAPAAAAAALVLGRRHGVVVGGGGGGVVVAAEREHMFDKVVTPSDVGKLNRLVVPKQHAERFFPAAAAGTQLCFEDRAGTPWRFRYSYWGSSQSYVMTKGWSRFVRAARLSAGDTVSFSRAADGRYFIDYRHCHRHGGRDISFASAATAMPAAAWPLFGRVQTAAPVSYGGGHGSAAAATMFLDTVAPVAAAGGHRGEVGPSGQRSFRLFGVNVECGGDVDAAAEEEDADDDVDDGDHRRGEEMELVMWTNHR.

Residues 17–29 show a composition bias toward acidic residues; the sequence is ATEEEEEEEEEEQ. A disordered region spans residues 17–36; the sequence is ATEEEEEEEEEEQALGQEPA. The segment at residues 71–168 is a DNA-binding region (TF-B3); it reads FDKVVTPSDV…RYFIDYRHCH (98 aa).

It localises to the nucleus. In Oryza sativa subsp. japonica (Rice), this protein is Putative B3 domain-containing protein Os08g0157700.